Here is a 1257-residue protein sequence, read N- to C-terminus: Liprin-alpha-2 (1257 aa).

Residues 1–29 (MMCEVMPTINEDTPMSQRGSQSSGSDSDS) form a disordered region. Low complexity predominate over residues 16–26 (SQRGSQSSGSD). 2 coiled-coil regions span residues 29–154 (SHFE…SLRM) and 185–235 (KALD…SSEG). Phosphoserine is present on Ser236. The residue at position 237 (Thr237) is a Phosphothreonine. Ser239 bears the Phosphoserine mark. 2 coiled-coil regions span residues 264 to 541 (TDDT…SLIE) and 643 to 695 (HSDA…GLNL). A disordered region spans residues 439-463 (GQLEEKNQELQRARQREKMNEEHNK). Phosphoserine occurs at positions 687 and 689. Residues 709-725 (TASSLASSSPPSGHSTP) are compositionally biased toward low complexity. Disordered regions lie at residues 709-738 (TASS…EMDR) and 759-834 (EEDG…KSSI). Residues 787–802 (TLPSSYHNDARSSLSA) show a composition bias toward polar residues. Residues Ser817 and Ser820 each carry the phosphoserine modification. SAM domains are found at residues 898-964 (WDGP…MVSL), 1020-1084 (NHEW…LKRL), and 1108-1177 (WSND…LLAL). Positions 1081-1107 (LKRLNYDRKELERRREASQHEIKDVLV) form a coiled coil.

The protein belongs to the liprin family. Liprin-alpha subfamily. As to quaternary structure, forms homodimers and heterodimers with liprins-alpha and liprins-beta. Interacts with the second PTPase domain of PTPRD, PTPRF and PTPRS. Interacts with KIF1A; the interaction decreases in presence of calcium.

It is found in the cytoplasm. The protein localises to the cell surface. The protein resides in the cell projection. Its subcellular location is the dendritic spine. Alters PTPRF cellular localization and induces PTPRF clustering. May regulate the disassembly of focal adhesions. May localize receptor-like tyrosine phosphatases type 2A at specific sites on the plasma membrane, possibly regulating their interaction with the extracellular environment and their association with substrates. In neuronal cells, is a scaffolding protein in the dendritic spines which acts as immobile postsynaptic post able to recruit KIF1A-driven dense core vesicles to dendritic spines. The chain is Liprin-alpha-2 (Ppfia2) from Mus musculus (Mouse).